We begin with the raw amino-acid sequence, 456 residues long: Kynurenine 3-monooxygenase (456 aa).

The protein belongs to the aromatic-ring hydroxylase family. KMO subfamily. FAD is required as a cofactor.

The catalysed reaction is L-kynurenine + NADPH + O2 + H(+) = 3-hydroxy-L-kynurenine + NADP(+) + H2O. It participates in cofactor biosynthesis; NAD(+) biosynthesis; quinolinate from L-kynurenine: step 1/3. Its function is as follows. Catalyzes the hydroxylation of L-kynurenine (L-Kyn) to form 3-hydroxy-L-kynurenine (L-3OHKyn). Required for synthesis of quinolinic acid. The chain is Kynurenine 3-monooxygenase from Xanthomonas campestris pv. campestris (strain B100).